The primary structure comprises 322 residues: MNGKTIILANPRGFCAGVDRAISIVERALEEFGAPIYVRHEVVHNKFVVDNLREKGAVFIEDLAEVPPGATLIYSAHGVSKAVQQEAAERGFRVFDATCPLVTKVHKEVARLDAQDCEIIMIGHKGHVEVEGTMGQLAPGKMLLVETVGDVAKLEVRNPDKLAYVSQTTLSVDETKDIIAALNARFPNIRNPHKEDICYATTNRQTAVKELAEQCDIVIVVGSPNSSNSNRLREVAAGIGTDAYMVDNASYLQRAWFEGKNKVGVTAGASAPEVLVQEVLATIRRWGHETVREGEGAEESIVFVLPKELRREGETKPDLCKR.

Cysteine 15 provides a ligand contact to [4Fe-4S] cluster. 2 residues coordinate (2E)-4-hydroxy-3-methylbut-2-enyl diphosphate: histidine 44 and histidine 77. Residues histidine 44 and histidine 77 each coordinate dimethylallyl diphosphate. 2 residues coordinate isopentenyl diphosphate: histidine 44 and histidine 77. Position 99 (cysteine 99) interacts with [4Fe-4S] cluster. (2E)-4-hydroxy-3-methylbut-2-enyl diphosphate is bound at residue histidine 127. Histidine 127 is a dimethylallyl diphosphate binding site. An isopentenyl diphosphate-binding site is contributed by histidine 127. Glutamate 129 acts as the Proton donor in catalysis. Residue threonine 168 participates in (2E)-4-hydroxy-3-methylbut-2-enyl diphosphate binding. A [4Fe-4S] cluster-binding site is contributed by cysteine 198. Serine 226, serine 227, asparagine 228, and serine 270 together coordinate (2E)-4-hydroxy-3-methylbut-2-enyl diphosphate. Dimethylallyl diphosphate is bound by residues serine 226, serine 227, asparagine 228, and serine 270. The isopentenyl diphosphate site is built by serine 226, serine 227, asparagine 228, and serine 270.

The protein belongs to the IspH family. It depends on [4Fe-4S] cluster as a cofactor.

It carries out the reaction isopentenyl diphosphate + 2 oxidized [2Fe-2S]-[ferredoxin] + H2O = (2E)-4-hydroxy-3-methylbut-2-enyl diphosphate + 2 reduced [2Fe-2S]-[ferredoxin] + 2 H(+). The enzyme catalyses dimethylallyl diphosphate + 2 oxidized [2Fe-2S]-[ferredoxin] + H2O = (2E)-4-hydroxy-3-methylbut-2-enyl diphosphate + 2 reduced [2Fe-2S]-[ferredoxin] + 2 H(+). It participates in isoprenoid biosynthesis; dimethylallyl diphosphate biosynthesis; dimethylallyl diphosphate from (2E)-4-hydroxy-3-methylbutenyl diphosphate: step 1/1. The protein operates within isoprenoid biosynthesis; isopentenyl diphosphate biosynthesis via DXP pathway; isopentenyl diphosphate from 1-deoxy-D-xylulose 5-phosphate: step 6/6. Catalyzes the conversion of 1-hydroxy-2-methyl-2-(E)-butenyl 4-diphosphate (HMBPP) into a mixture of isopentenyl diphosphate (IPP) and dimethylallyl diphosphate (DMAPP). Acts in the terminal step of the DOXP/MEP pathway for isoprenoid precursor biosynthesis. This is 4-hydroxy-3-methylbut-2-enyl diphosphate reductase from Neisseria meningitidis serogroup C (strain 053442).